The chain runs to 925 residues: Proto-oncogene DBL (925 aa).

One can recognise a CRAL-TRIO domain in the interval 1–88 (MAEANPRRGK…ELGGTLQYCH (88 aa)). Residues 221 to 322 (WKFEQDFQQL…EIKAKRIQLS (102 aa)) form a Spectrin repeat. A DH domain is found at 495–675 (LKNHVLNELI…LDLLKSVNDS (181 aa)). The 123-residue stretch at 687–809 (NLNELGKMIM…WLKEIRNILL (123 aa)) folds into the PH domain.

This sequence belongs to the MCF2 family. Interacts with an array of inositol phospholipids such as phosphatidylinositol 3-phosphate (PI3P), phosphatidylinositol 4-phosphate (PI4P) and phosphatidylinositol 5-phosphate (PI5P). May interact with CCPG1. In terms of processing, phosphorylation by TNK2 enhances guanine nucleotide exchange factor (GEF) activity toward Rho family proteins. Isoform 1 is expressed only in brain. Isoform 3 is expressed in heart, kidney, spleen, liver and testis. Isoform 4 is expressed in brain, heart, kidney, testis, placenta, stomach and peripheral blood. The protein is detectable in brain, heart, kidney, intestine, muscle, lung and testis.

The protein resides in the cytoplasm. Its subcellular location is the membrane. Its function is as follows. Guanine nucleotide exchange factor (GEF) that modulates the Rho family of GTPases. Promotes the conversion of some member of the Rho family GTPase from the GDP-bound to the GTP-bound form. Isoform 1 exhibits no activity toward RHOA, RAC1 or CDC42. Isoform 2 exhibits decreased GEF activity toward CDC42. Isoform 3 exhibits a weak but significant activity toward RAC1 and CDC42. Isoform 4 exhibits significant activity toward RHOA and CDC42. The truncated DBL oncogene is active toward RHOA, RAC1 and CDC42. This Homo sapiens (Human) protein is Proto-oncogene DBL (MCF2).